The chain runs to 256 residues: Alcohol dehydrogenase (256 aa).

12 to 35 (FVAGLGGIGLDTSKELVKRDLKNL) provides a ligand contact to NAD(+). A substrate-binding site is contributed by Ser140. Tyr153 functions as the Proton acceptor in the catalytic mechanism.

The protein belongs to the short-chain dehydrogenases/reductases (SDR) family. In terms of assembly, homodimer.

The enzyme catalyses a primary alcohol + NAD(+) = an aldehyde + NADH + H(+). The catalysed reaction is a secondary alcohol + NAD(+) = a ketone + NADH + H(+). The sequence is that of Alcohol dehydrogenase (Adh) from Drosophila yakuba (Fruit fly).